A 445-amino-acid polypeptide reads, in one-letter code: mRNA cleavage and polyadenylation factor CLP1 (445 aa).

ATP is bound by residues D33, K72, and 133 to 138 (QTGKTS).

This sequence belongs to the Clp1 family. Clp1 subfamily. As to quaternary structure, component of the cleavage factor IA (CF IA) complex, which is a heterohexameric complex with 2:2:1:1 stoichiometry of RNA14, RNA15, PCF11 and CLP1. It contains 2 copies of an RNA14-RNA15 dimer and 1 copy of CLP1-PCF11. The complex interacts with the cleavage factor HRB1/CF IB to form the cleavage factor I (CF I) complex, and binds to RNA. Interacts directly with PCF11. Interacts with the CPF components CFT1, PTA1, PFS2, YSH1 and SSU72.

It is found in the nucleus. Component of the cleavage factor IA (CF IA) complex, which is involved in the endonucleolytic cleavage during polyadenylation-dependent pre-mRNA 3'-end formation. Associates with HRB1/CF IB to form the cleavage factor I (CF I) complex. CF I is required for correct positioning of a larger protein complex, the cleavage and polyadenylation factor (CPF) complex, which contains the catalytic subunits executing mRNA cleavage and polyadenylation. CLP1 mediates interactions between CF IA and CPF factors. CLP1 is also involved in maintaining the CF IA interaction with the C-terminal domain of RNA Pol II largest subunit via PCF11, which links pre-mRNA 3'-end processing to transcription termination. In Saccharomyces cerevisiae (strain YJM789) (Baker's yeast), this protein is mRNA cleavage and polyadenylation factor CLP1.